The following is a 470-amino-acid chain: Velvet complex subunit B (470 aa).

Disordered regions lie at residues 1 to 148 (MNSS…EEGT) and 223 to 321 (VRSS…NPLF). The span at 15 to 37 (PGPGYSSSVPPPIHAYQQQQQHQ) shows a compositional bias: low complexity. The span at 38-49 (HPPPSLLPPPPT) shows a compositional bias: pro residues. The span at 74–86 (HQHHAPPPPHHHS) shows a compositional bias: basic residues. The span at 102-124 (NQYPRPHPLPPSRNDEPPPPSSE) shows a compositional bias: pro residues. The Velvet domain maps to 147–452 (GTGLKYSLDV…ALQGIKIPIR (306 aa)). The span at 232–241 (GASSNNYSYS) shows a compositional bias: low complexity. The span at 242 to 255 (TLEPSTPSYQQQAL) shows a compositional bias: polar residues. Residues 280–301 (QQGYGQAPSYQSSSSYGPPQQY) are compositionally biased toward low complexity. A compositionally biased stretch (polar residues) spans 307-318 (GYNTDPPASSAN).

It belongs to the velvet family. VelB subfamily. As to quaternary structure, component of the heterotrimeric velvet complex composed of laeA, veA and velB; VeA acting as a bridging protein between laeA and velB. Forms a heterodimeric complex with vosA; the formation of the velB-vosA complex is light-dependent.

It is found in the nucleus. It localises to the cytoplasm. Component of the velvet transcription factor complex that controls sexual/asexual developmental ratio in response to light, promoting sexual development in the darkness while stimulating asexual sporulation under illumination. The velvet complex acts as a global regulator for secondary metabolite gene expression. Component of the velB-VosA heterodimeric complex that plays a dual role in activating genes associated with spore maturation and repressing certain development-associated genes. The complex binds DNA through the DNA-binding domain of vosA that recognizes an 11-nucleotide consensus sequence 5'-CTGGCCGCGGC-3' consisting of two motifs in the promoters of key developmental regulatory genes. Controls the expression of the pink pigment aurofusarin and the mycotoxin deoxynivalenol gene clusters. Regulates hyphae formation, hyphal hydrophobicity and conidiation. Regulates of cell wall integrity and pathogenicity. The protein is Velvet complex subunit B of Gibberella zeae (strain ATCC MYA-4620 / CBS 123657 / FGSC 9075 / NRRL 31084 / PH-1) (Wheat head blight fungus).